Consider the following 364-residue polypeptide: Probable dual-specificity RNA methyltransferase RlmN (364 aa).

Glu-107 (proton acceptor) is an active-site residue. The Radical SAM core domain occupies 113–346 (HDYGNSVCVT…ATIRREQGSD (234 aa)). A disulfide bridge connects residues Cys-120 and Cys-351. Cys-127, Cys-131, and Cys-134 together coordinate [4Fe-4S] cluster. Residues 177-178 (GE), Ser-209, 232-234 (SLH), and Asn-308 each bind S-adenosyl-L-methionine. The S-methylcysteine intermediate role is filled by Cys-351.

This sequence belongs to the radical SAM superfamily. RlmN family. [4Fe-4S] cluster is required as a cofactor.

The protein localises to the cytoplasm. The catalysed reaction is adenosine(2503) in 23S rRNA + 2 reduced [2Fe-2S]-[ferredoxin] + 2 S-adenosyl-L-methionine = 2-methyladenosine(2503) in 23S rRNA + 5'-deoxyadenosine + L-methionine + 2 oxidized [2Fe-2S]-[ferredoxin] + S-adenosyl-L-homocysteine. It carries out the reaction adenosine(37) in tRNA + 2 reduced [2Fe-2S]-[ferredoxin] + 2 S-adenosyl-L-methionine = 2-methyladenosine(37) in tRNA + 5'-deoxyadenosine + L-methionine + 2 oxidized [2Fe-2S]-[ferredoxin] + S-adenosyl-L-homocysteine. In terms of biological role, specifically methylates position 2 of adenine 2503 in 23S rRNA and position 2 of adenine 37 in tRNAs. Confers resistance to some classes of antibiotics. This chain is Probable dual-specificity RNA methyltransferase RlmN, found in Staphylococcus aureus (strain Mu3 / ATCC 700698).